A 204-amino-acid chain; its full sequence is Holliday junction branch migration complex subunit RuvA (204 aa).

The domain I stretch occupies residues 1–64 (MIARLRGTLL…EDGQTLFGFR (64 aa)). The interval 65 to 143 (TRAERDLFRR…GVGGGSTAAP (79 aa)) is domain II. The segment at 144–153 (AAGADHPTGE) is flexible linker. The tract at residues 153 to 204 (ENDPVSEAIEGLVALGYKPPEAARMARNAAEPELGCEAIIRRALQRAVPRGG) is domain III.

Belongs to the RuvA family. As to quaternary structure, homotetramer. Forms an RuvA(8)-RuvB(12)-Holliday junction (HJ) complex. HJ DNA is sandwiched between 2 RuvA tetramers; dsDNA enters through RuvA and exits via RuvB. An RuvB hexamer assembles on each DNA strand where it exits the tetramer. Each RuvB hexamer is contacted by two RuvA subunits (via domain III) on 2 adjacent RuvB subunits; this complex drives branch migration. In the full resolvosome a probable DNA-RuvA(4)-RuvB(12)-RuvC(2) complex forms which resolves the HJ.

It is found in the cytoplasm. In terms of biological role, the RuvA-RuvB-RuvC complex processes Holliday junction (HJ) DNA during genetic recombination and DNA repair, while the RuvA-RuvB complex plays an important role in the rescue of blocked DNA replication forks via replication fork reversal (RFR). RuvA specifically binds to HJ cruciform DNA, conferring on it an open structure. The RuvB hexamer acts as an ATP-dependent pump, pulling dsDNA into and through the RuvAB complex. HJ branch migration allows RuvC to scan DNA until it finds its consensus sequence, where it cleaves and resolves the cruciform DNA. The sequence is that of Holliday junction branch migration complex subunit RuvA from Halorhodospira halophila (strain DSM 244 / SL1) (Ectothiorhodospira halophila (strain DSM 244 / SL1)).